A 148-amino-acid polypeptide reads, in one-letter code: Azurin (148 aa).

A signal peptide spans 1–20 (MLRKLAAVSLLSLLSAPLLA). The region spanning 21 to 148 (AECSVDIQGN…ALMKGTLTLK (128 aa)) is the Plastocyanin-like domain. Cys-23 and Cys-46 are oxidised to a cystine. Residues His-66, Cys-132, His-137, and Met-141 each coordinate Cu cation.

The protein localises to the periplasm. Transfers electrons from cytochrome c551 to cytochrome oxidase. The sequence is that of Azurin (azu) from Pseudomonas aeruginosa (strain ATCC 15692 / DSM 22644 / CIP 104116 / JCM 14847 / LMG 12228 / 1C / PRS 101 / PAO1).